Reading from the N-terminus, the 470-residue chain is ATP synthase subunit beta (470 aa).

157-164 (GGAGVGKT) lines the ATP pocket.

The protein belongs to the ATPase alpha/beta chains family. F-type ATPases have 2 components, CF(1) - the catalytic core - and CF(0) - the membrane proton channel. CF(1) has five subunits: alpha(3), beta(3), gamma(1), delta(1), epsilon(1). CF(0) has three main subunits: a(1), b(2) and c(9-12). The alpha and beta chains form an alternating ring which encloses part of the gamma chain. CF(1) is attached to CF(0) by a central stalk formed by the gamma and epsilon chains, while a peripheral stalk is formed by the delta and b chains.

The protein localises to the cell inner membrane. It catalyses the reaction ATP + H2O + 4 H(+)(in) = ADP + phosphate + 5 H(+)(out). Its function is as follows. Produces ATP from ADP in the presence of a proton gradient across the membrane. The catalytic sites are hosted primarily by the beta subunits. This chain is ATP synthase subunit beta, found in Geotalea uraniireducens (strain Rf4) (Geobacter uraniireducens).